A 129-amino-acid chain; its full sequence is Thylakoid-associated single-stranded DNA-binding protein slr1034 (129 aa).

The SSB domain maps to 1–100 (MNSFVLMATV…LTASRISLVD (100 aa)). Residues 99-129 (VDSGNGINPGELSSPPEPEAVDLSNTDDIPF) are disordered.

Homotetramer.

It localises to the cellular thylakoid membrane. The protein is Thylakoid-associated single-stranded DNA-binding protein slr1034 of Synechocystis sp. (strain ATCC 27184 / PCC 6803 / Kazusa).